The chain runs to 434 residues: NADH-quinone oxidoreductase subunit F 1 (434 aa).

54-63 (GRGGAGFPTG) lines the NAD(+) pocket. Residue 166–213 (GAGAYICGEETALLESLEGKKGQPRLKPPFPANMGLYGCPTTVNNVES) participates in FMN binding. Cys345, Cys348, Cys351, and Cys391 together coordinate [4Fe-4S] cluster.

Belongs to the complex I 51 kDa subunit family. FMN is required as a cofactor. It depends on [4Fe-4S] cluster as a cofactor.

It carries out the reaction a quinone + NADH + 5 H(+)(in) = a quinol + NAD(+) + 4 H(+)(out). In terms of biological role, NDH-1 shuttles electrons from NADH, via FMN and iron-sulfur (Fe-S) centers, to quinones in the respiratory chain. The immediate electron acceptor for the enzyme in this species is believed to be ubiquinone. Couples the redox reaction to proton translocation (for every two electrons transferred, four hydrogen ions are translocated across the cytoplasmic membrane), and thus conserves the redox energy in a proton gradient. The sequence is that of NADH-quinone oxidoreductase subunit F 1 (nuoF1) from Rhizobium meliloti (strain 1021) (Ensifer meliloti).